A 401-amino-acid polypeptide reads, in one-letter code: Nicotinate phosphoribosyltransferase (401 aa).

Residue H224 is modified to Phosphohistidine; by autocatalysis.

The protein belongs to the NAPRTase family. Post-translationally, transiently phosphorylated on a His residue during the reaction cycle. Phosphorylation strongly increases the affinity for substrates and increases the rate of nicotinate D-ribonucleotide production. Dephosphorylation regenerates the low-affinity form of the enzyme, leading to product release.

It catalyses the reaction nicotinate + 5-phospho-alpha-D-ribose 1-diphosphate + ATP + H2O = nicotinate beta-D-ribonucleotide + ADP + phosphate + diphosphate. The protein operates within cofactor biosynthesis; NAD(+) biosynthesis; nicotinate D-ribonucleotide from nicotinate: step 1/1. Functionally, catalyzes the synthesis of beta-nicotinate D-ribonucleotide from nicotinate and 5-phospho-D-ribose 1-phosphate at the expense of ATP. This chain is Nicotinate phosphoribosyltransferase, found in Pseudomonas putida (strain ATCC 47054 / DSM 6125 / CFBP 8728 / NCIMB 11950 / KT2440).